Consider the following 159-residue polypeptide: Transcription elongation factor GreA (159 aa).

A coiled-coil region spans residues 44-75 (SENAEYDAAREQQSQTEARIADLESKLSSATI).

This sequence belongs to the GreA/GreB family.

Its function is as follows. Necessary for efficient RNA polymerase transcription elongation past template-encoded arresting sites. The arresting sites in DNA have the property of trapping a certain fraction of elongating RNA polymerases that pass through, resulting in locked ternary complexes. Cleavage of the nascent transcript by cleavage factors such as GreA or GreB allows the resumption of elongation from the new 3'terminus. GreA releases sequences of 2 to 3 nucleotides. The protein is Transcription elongation factor GreA of Chlorobium phaeovibrioides (strain DSM 265 / 1930) (Prosthecochloris vibrioformis (strain DSM 265)).